A 447-amino-acid chain; its full sequence is 3-phosphoshikimate 1-carboxyvinyltransferase 2 (447 aa).

K40, S41, and R45 together coordinate 3-phosphoshikimate. Residue K40 coordinates phosphoenolpyruvate. The phosphoenolpyruvate site is built by G109 and R138. 3-phosphoshikimate contacts are provided by S184, S185, Q186, D329, and H356. Q186 provides a ligand contact to phosphoenolpyruvate. D329 functions as the Proton acceptor in the catalytic mechanism. Phosphoenolpyruvate contacts are provided by R360, R403, and K428.

It belongs to the EPSP synthase family. Monomer.

It is found in the cytoplasm. The enzyme catalyses 3-phosphoshikimate + phosphoenolpyruvate = 5-O-(1-carboxyvinyl)-3-phosphoshikimate + phosphate. It functions in the pathway metabolic intermediate biosynthesis; chorismate biosynthesis; chorismate from D-erythrose 4-phosphate and phosphoenolpyruvate: step 6/7. Functionally, catalyzes the transfer of the enolpyruvyl moiety of phosphoenolpyruvate (PEP) to the 5-hydroxyl of shikimate-3-phosphate (S3P) to produce enolpyruvyl shikimate-3-phosphate and inorganic phosphate. The chain is 3-phosphoshikimate 1-carboxyvinyltransferase 2 from Halalkalibacterium halodurans (strain ATCC BAA-125 / DSM 18197 / FERM 7344 / JCM 9153 / C-125) (Bacillus halodurans).